Reading from the N-terminus, the 185-residue chain is Elongation factor P (185 aa).

Belongs to the elongation factor P family.

It localises to the cytoplasm. It functions in the pathway protein biosynthesis; polypeptide chain elongation. Its function is as follows. Involved in peptide bond synthesis. Stimulates efficient translation and peptide-bond synthesis on native or reconstituted 70S ribosomes in vitro. Probably functions indirectly by altering the affinity of the ribosome for aminoacyl-tRNA, thus increasing their reactivity as acceptors for peptidyl transferase. This chain is Elongation factor P, found in Bacillus cereus (strain ATCC 10987 / NRS 248).